The chain runs to 55 residues: Large ribosomal subunit protein bL33 (55 aa).

Belongs to the bacterial ribosomal protein bL33 family.

The sequence is that of Large ribosomal subunit protein bL33 from Escherichia coli (strain K12 / DH10B).